The chain runs to 116 residues: Guanylin (116 aa).

Residues 1 to 23 form the signal peptide; sequence MNACVLSVLCLLGALAVLVEGVT. The propeptide occupies 24–101; it reads VQDGDLSFPL…LQRLEAIAQD (78 aa). Cystine bridges form between Cys-69–Cys-83, Cys-105–Cys-113, and Cys-108–Cys-116.

It belongs to the guanylin family. In terms of tissue distribution, localized in both crypts and villi in the small intestine and to superficial epithelial cells in the colon.

The protein localises to the secreted. Functionally, endogenous activator of intestinal guanylate cyclase. It stimulates this enzyme through the same receptor binding region as the heat-stable enterotoxins. This Mus musculus (Mouse) protein is Guanylin (Guca2a).